Consider the following 201-residue polypeptide: Putative ankyrin repeat protein YahD (201 aa).

ANK repeat units lie at residues Asn-5 to Thr-34, Gln-38 to Lys-67, Thr-71 to Cys-100, Phe-104 to Gln-134, Val-138 to Leu-172, and Tyr-176 to Ala-201.

This is Putative ankyrin repeat protein YahD (yahD) from Escherichia coli (strain K12).